A 506-amino-acid chain; its full sequence is Maturase K (506 aa).

Belongs to the intron maturase 2 family. MatK subfamily.

The protein localises to the plastid. Its subcellular location is the chloroplast. Usually encoded in the trnK tRNA gene intron. Probably assists in splicing its own and other chloroplast group II introns. The chain is Maturase K from Mentzelia lindleyi (Blazing star).